A 91-amino-acid chain; its full sequence is Thioredoxin (91 aa).

The Thioredoxin domain maps to Ser2–Lys91. Cysteines 33 and 36 form a disulfide.

Belongs to the thioredoxin family.

Its function is as follows. Participates in various redox reactions through the reversible oxidation of its active center dithiol to a disulfide and catalyzes dithiol-disulfide exchange reactions. This is Thioredoxin (trxA) from Thiocapsa roseopersicina.